We begin with the raw amino-acid sequence, 274 residues long: DNA-directed RNA polymerase subunit Rpo3 (274 aa).

Cys202, Cys205, and Cys208 together coordinate [3Fe-4S] cluster.

The protein belongs to the archaeal Rpo3/eukaryotic RPB3 RNA polymerase subunit family. As to quaternary structure, part of the RNA polymerase complex. The cofactor is [3Fe-4S] cluster.

The protein resides in the cytoplasm. The catalysed reaction is RNA(n) + a ribonucleoside 5'-triphosphate = RNA(n+1) + diphosphate. Functionally, DNA-dependent RNA polymerase (RNAP) catalyzes the transcription of DNA into RNA using the four ribonucleoside triphosphates as substrates. This chain is DNA-directed RNA polymerase subunit Rpo3, found in Methanobrevibacter smithii (strain ATCC 35061 / DSM 861 / OCM 144 / PS).